The chain runs to 286 residues: Beta-lactamase SHV-24 (286 aa).

The N-terminal stretch at 1 to 21 is a signal peptide; it reads MRYIRLCIISLLATLPLAVHA. The active-site Acyl-ester intermediate is S66. The cysteines at positions 73 and 119 are disulfide-linked. Catalysis depends on E164, which acts as the Proton acceptor. 230–232 serves as a coordination point for substrate; that stretch reads KTG.

The protein belongs to the class-A beta-lactamase family.

The catalysed reaction is a beta-lactam + H2O = a substituted beta-amino acid. Functionally, hydrolyzes ampicillin. Can also hydrolyze cephaloridine, aztreonam and ceftazidime with a low catalytic rate. The chain is Beta-lactamase SHV-24 (bla) from Escherichia coli.